The primary structure comprises 626 residues: Elongation factor 4 (626 aa).

Positions 14-195 constitute a tr-type G domain; the sequence is SVIRNFCIIA…QIVMDVPAPH (182 aa). GTP contacts are provided by residues 26–31 and 142–145; these read DHGKST and NKID. Residues 603–626 form a disordered region; it reads LSTGEDSNDRDTKDKIRAAQKTEG. Positions 609–626 are enriched in basic and acidic residues; it reads SNDRDTKDKIRAAQKTEG.

It belongs to the TRAFAC class translation factor GTPase superfamily. Classic translation factor GTPase family. LepA subfamily.

The protein localises to the cell membrane. The catalysed reaction is GTP + H2O = GDP + phosphate + H(+). Its function is as follows. Required for accurate and efficient protein synthesis under certain stress conditions. May act as a fidelity factor of the translation reaction, by catalyzing a one-codon backward translocation of tRNAs on improperly translocated ribosomes. Back-translocation proceeds from a post-translocation (POST) complex to a pre-translocation (PRE) complex, thus giving elongation factor G a second chance to translocate the tRNAs correctly. Binds to ribosomes in a GTP-dependent manner. The polypeptide is Elongation factor 4 (Bifidobacterium longum (strain DJO10A)).